A 547-amino-acid polypeptide reads, in one-letter code: ATP synthase subunit alpha (547 aa).

172-179 is a binding site for ATP; it reads GDRKTGKT.

It belongs to the ATPase alpha/beta chains family. As to quaternary structure, F-type ATPases have 2 components, CF(1) - the catalytic core - and CF(0) - the membrane proton channel. CF(1) has five subunits: alpha(3), beta(3), gamma(1), delta(1), epsilon(1). CF(0) has three main subunits: a(1), b(2) and c(9-12). The alpha and beta chains form an alternating ring which encloses part of the gamma chain. CF(1) is attached to CF(0) by a central stalk formed by the gamma and epsilon chains, while a peripheral stalk is formed by the delta and b chains.

It localises to the cell membrane. The enzyme catalyses ATP + H2O + 4 H(+)(in) = ADP + phosphate + 5 H(+)(out). In terms of biological role, produces ATP from ADP in the presence of a proton gradient across the membrane. The alpha chain is a regulatory subunit. In Rhodococcus jostii (strain RHA1), this protein is ATP synthase subunit alpha.